Reading from the N-terminus, the 333-residue chain is Phosphate acyltransferase (333 aa).

It belongs to the PlsX family. Homodimer. Probably interacts with PlsY.

The protein localises to the cytoplasm. It catalyses the reaction a fatty acyl-[ACP] + phosphate = an acyl phosphate + holo-[ACP]. The protein operates within lipid metabolism; phospholipid metabolism. Its function is as follows. Catalyzes the reversible formation of acyl-phosphate (acyl-PO(4)) from acyl-[acyl-carrier-protein] (acyl-ACP). This enzyme utilizes acyl-ACP as fatty acyl donor, but not acyl-CoA. The chain is Phosphate acyltransferase from Lactobacillus acidophilus (strain ATCC 700396 / NCK56 / N2 / NCFM).